A 55-amino-acid polypeptide reads, in one-letter code: Large ribosomal subunit protein eL40 (55 aa).

This sequence belongs to the eukaryotic ribosomal protein eL40 family.

The chain is Large ribosomal subunit protein eL40 from Ignicoccus hospitalis (strain KIN4/I / DSM 18386 / JCM 14125).